The chain runs to 142 residues: Large ribosomal subunit protein uL13 (142 aa).

The protein belongs to the universal ribosomal protein uL13 family. In terms of assembly, part of the 50S ribosomal subunit.

Functionally, this protein is one of the early assembly proteins of the 50S ribosomal subunit, although it is not seen to bind rRNA by itself. It is important during the early stages of 50S assembly. This Francisella tularensis subsp. holarctica (strain FTNF002-00 / FTA) protein is Large ribosomal subunit protein uL13.